The following is a 266-amino-acid chain: Cell wall synthesis protein Wag31 (266 aa).

Residues 31-64 are a coiled coil; the sequence is FLDLVENELTQLIEENSDLRQRIEELDHELAAGG. At Thr77 the chain carries Phosphothreonine. A coiled-coil region spans residues 152–203; the sequence is TAEATVAEAQQRADAMLADAQTRSEVQSRQAQEKADALQAEAERKHSEIMGA. The interval 239-266 is disordered; it reads ELGQRGSAAPVDSNADAGGFDQFNRGNN.

The protein belongs to the DivIVA family. Forms homooligomers. In terms of processing, phosphorylated by PknA.

It is found in the cytoplasm. Its function is as follows. Important for maintaining cell shape and cell wall integrity by localizing peptidoglycan synthesis to the cell poles. The polypeptide is Cell wall synthesis protein Wag31 (wag31) (Mycobacterium leprae (strain TN)).